The chain runs to 554 residues: Putative mediator of RNA polymerase II transcription subunit 29 (554 aa).

Disordered regions lie at residues 118–301 (DNKA…NTEA), 330–381 (QQQQ…PLPQ), 398–428 (LENQ…LQLQ), and 483–524 (NTNL…DDNT). Over residues 122-210 (NTNNNNNNNN…NNSINNNSNN (89 aa)) the composition is skewed to low complexity. Positions 167–194 (NNNNNNNYNNNNNNNNNNNNNNNNNNNN) form a coiled coil. Polar residues predominate over residues 211–225 (KVGSNDNPSTAPITE). The segment covering 226 to 264 (NNTENNAGNTNNTNNNNNNNNNNNNNNNNNNNNNNNNTN) has biased composition (low complexity). The segment covering 265–300 (QVAESSNISSNTTPPETTNIVNDPNSVSGGNLTNTE) has biased composition (polar residues). Composition is skewed to low complexity over residues 330-374 (QQQQ…QQPQ), 419-428 (QQQQEQLQLQ), and 483-517 (NTNL…PEIN). The stretch at 419 to 486 (QQQQEQLQLQ…SLENQINTNL (68 aa)) forms a coiled coil.

Belongs to the Mediator complex subunit 29 family. Component of the Mediator complex.

Its subcellular location is the nucleus. Its function is as follows. Component of the Mediator complex, a coactivator involved in the regulated transcription of nearly all RNA polymerase II-dependent genes. Mediator functions as a bridge to convey information from gene-specific regulatory proteins to the basal RNA polymerase II transcription machinery. Mediator is recruited to promoters by direct interactions with regulatory proteins and serves as a scaffold for the assembly of a functional preinitiation complex with RNA polymerase II and the general transcription factors. The polypeptide is Putative mediator of RNA polymerase II transcription subunit 29 (med29) (Dictyostelium discoideum (Social amoeba)).